A 162-amino-acid chain; its full sequence is Phosphopantetheine adenylyltransferase (162 aa).

Residue Thr14 coordinates substrate. Residues Thr14–Phe15 and His22 each bind ATP. Positions 46, 78, and 92 each coordinate substrate. Residues Gly93–Arg95, Glu103, and His128–Ser134 contribute to the ATP site.

It belongs to the bacterial CoaD family. In terms of assembly, homohexamer. The cofactor is Mg(2+).

The protein localises to the cytoplasm. It carries out the reaction (R)-4'-phosphopantetheine + ATP + H(+) = 3'-dephospho-CoA + diphosphate. Its pathway is cofactor biosynthesis; coenzyme A biosynthesis; CoA from (R)-pantothenate: step 4/5. Functionally, reversibly transfers an adenylyl group from ATP to 4'-phosphopantetheine, yielding dephospho-CoA (dPCoA) and pyrophosphate. This is Phosphopantetheine adenylyltransferase from Xylella fastidiosa (strain M23).